The primary structure comprises 340 residues: Putative D-lactate dehydrogenase (340 aa).

NAD(+) is bound by residues 153-154 (NI), Asp-174, 206-207 (TP), 233-235 (VSR), and Asp-259. Arg-235 is a catalytic residue. Glu-264 is an active-site residue. His-296 serves as the catalytic Proton donor.

It belongs to the D-isomer specific 2-hydroxyacid dehydrogenase family.

It carries out the reaction (R)-lactate + NAD(+) = pyruvate + NADH + H(+). In Dictyostelium discoideum (Social amoeba), this protein is Putative D-lactate dehydrogenase (ldhA).